The primary structure comprises 200 residues: dITP/XTP pyrophosphatase (200 aa).

Residue 16 to 21 coordinates substrate; the sequence is SNNDGK. 2 residues coordinate Mg(2+): Glu46 and Asp75. The Proton acceptor role is filled by Asp75. Residues Ser76, 154-157, Lys177, and 182-183 contribute to the substrate site; these read FGYD and HR.

Belongs to the HAM1 NTPase family. In terms of assembly, homodimer. Mg(2+) serves as cofactor.

The catalysed reaction is XTP + H2O = XMP + diphosphate + H(+). It carries out the reaction dITP + H2O = dIMP + diphosphate + H(+). The enzyme catalyses ITP + H2O = IMP + diphosphate + H(+). Pyrophosphatase that catalyzes the hydrolysis of nucleoside triphosphates to their monophosphate derivatives, with a high preference for the non-canonical purine nucleotides XTP (xanthosine triphosphate), dITP (deoxyinosine triphosphate) and ITP. Seems to function as a house-cleaning enzyme that removes non-canonical purine nucleotides from the nucleotide pool, thus preventing their incorporation into DNA/RNA and avoiding chromosomal lesions. In Prochlorococcus marinus (strain SARG / CCMP1375 / SS120), this protein is dITP/XTP pyrophosphatase.